Reading from the N-terminus, the 229-residue chain is UPF0758 protein MA_1979 (229 aa).

Residues 106–228 enclose the MPN domain; it reads KICSPKDVYA…YVSLKDEGFV (123 aa). H177, H179, and D190 together coordinate Zn(2+). A JAMM motif motif is present at residues 177 to 190; sequence HNHPSGDPSPSRED.

This sequence belongs to the UPF0758 family.

In Methanosarcina acetivorans (strain ATCC 35395 / DSM 2834 / JCM 12185 / C2A), this protein is UPF0758 protein MA_1979.